Reading from the N-terminus, the 206-residue chain is Peptidyl-tRNA hydrolase (206 aa).

Y19 is a tRNA binding site. The Proton acceptor role is filled by H24. Y70, N72, and N118 together coordinate tRNA.

It belongs to the PTH family. As to quaternary structure, monomer.

The protein resides in the cytoplasm. The enzyme catalyses an N-acyl-L-alpha-aminoacyl-tRNA + H2O = an N-acyl-L-amino acid + a tRNA + H(+). Functionally, hydrolyzes ribosome-free peptidyl-tRNAs (with 1 or more amino acids incorporated), which drop off the ribosome during protein synthesis, or as a result of ribosome stalling. Its function is as follows. Catalyzes the release of premature peptidyl moieties from peptidyl-tRNA molecules trapped in stalled 50S ribosomal subunits, and thus maintains levels of free tRNAs and 50S ribosomes. This is Peptidyl-tRNA hydrolase from Prochlorococcus marinus (strain MIT 9313).